A 125-amino-acid chain; its full sequence is Small ribosomal subunit protein bS6 (125 aa).

A disordered region spans residues 99 to 125 (PSIMMKSVEREEARKASTEASAPAQAQ). A compositionally biased stretch (basic and acidic residues) spans 105-115 (SVEREEARKAS). Residues 116-125 (TEASAPAQAQ) are compositionally biased toward polar residues.

The protein belongs to the bacterial ribosomal protein bS6 family.

Functionally, binds together with bS18 to 16S ribosomal RNA. In Bordetella petrii (strain ATCC BAA-461 / DSM 12804 / CCUG 43448), this protein is Small ribosomal subunit protein bS6.